Here is a 149-residue protein sequence, read N- to C-terminus: Nucleoside diphosphate kinase (149 aa).

Lysine 9, phenylalanine 57, arginine 85, threonine 91, arginine 102, and asparagine 112 together coordinate ATP. The active-site Pros-phosphohistidine intermediate is the histidine 115.

The protein belongs to the NDK family. It depends on Mg(2+) as a cofactor.

It localises to the cytoplasm. It catalyses the reaction a 2'-deoxyribonucleoside 5'-diphosphate + ATP = a 2'-deoxyribonucleoside 5'-triphosphate + ADP. The enzyme catalyses a ribonucleoside 5'-diphosphate + ATP = a ribonucleoside 5'-triphosphate + ADP. Its function is as follows. Major role in the synthesis of nucleoside triphosphates other than ATP. The ATP gamma phosphate is transferred to the NDP beta phosphate via a ping-pong mechanism, using a phosphorylated active-site intermediate. In Methanococcoides burtonii (strain DSM 6242 / NBRC 107633 / OCM 468 / ACE-M), this protein is Nucleoside diphosphate kinase.